Here is a 152-residue protein sequence, read N- to C-terminus: Ribosome maturation factor RimP (152 aa).

Belongs to the RimP family.

The protein resides in the cytoplasm. In terms of biological role, required for maturation of 30S ribosomal subunits. The sequence is that of Ribosome maturation factor RimP from Burkholderia vietnamiensis (strain G4 / LMG 22486) (Burkholderia cepacia (strain R1808)).